The primary structure comprises 309 residues: Succinoglycan biosynthesis protein ExoM (309 aa).

Belongs to the glycosyltransferase 2 family.

The protein resides in the cell inner membrane. The protein operates within glycan metabolism; exopolysaccharide biosynthesis. Glycosyltransferase required for the synthesis of succinoglycan (EPS I). Needed for the addition of the fourth sugar (glucose), catalyzes the formation of a beta-1,4 linkage between the third acetylated sugar and the fourth sugar. This Rhizobium meliloti (strain 1021) (Ensifer meliloti) protein is Succinoglycan biosynthesis protein ExoM (exoM).